The chain runs to 379 residues: Epoxyqueuosine reductase (379 aa).

The active-site Proton donor is Asp-139. The 4Fe-4S ferredoxin-type domain maps to 181 to 213 (IPLPVDQPVEEGCGKCVACMTICPTGAIVEPYT). [4Fe-4S] cluster contacts are provided by Cys-193, Cys-196, Cys-199, Cys-203, Cys-219, Cys-246, Cys-249, and Cys-253.

The protein belongs to the QueG family. In terms of assembly, monomer. Cob(II)alamin serves as cofactor. Requires [4Fe-4S] cluster as cofactor.

It localises to the cytoplasm. It carries out the reaction epoxyqueuosine(34) in tRNA + AH2 = queuosine(34) in tRNA + A + H2O. The protein operates within tRNA modification; tRNA-queuosine biosynthesis. Its function is as follows. Catalyzes the conversion of epoxyqueuosine (oQ) to queuosine (Q), which is a hypermodified base found in the wobble positions of tRNA(Asp), tRNA(Asn), tRNA(His) and tRNA(Tyr). The polypeptide is Epoxyqueuosine reductase (Shigella dysenteriae serotype 1 (strain Sd197)).